A 44-amino-acid chain; its full sequence is Photosystem I reaction center subunit IX (44 aa).

The helical transmembrane segment at 7–27 threads the bilayer; the sequence is YLSVAPVLSTLWFGALAGLLI.

Belongs to the PsaJ family.

The protein localises to the plastid. It is found in the chloroplast thylakoid membrane. Its function is as follows. May help in the organization of the PsaE and PsaF subunits. This chain is Photosystem I reaction center subunit IX, found in Coffea arabica (Arabian coffee).